A 228-amino-acid chain; its full sequence is U1 small nuclear ribonucleoprotein C (228 aa).

The Matrin-type; degenerate zinc-finger motif lies at 11–43 (ATVDYCDIFLTHDSASVRKAHNTGWKHKMQVEH). The segment at 83–127 (GQRGQPVGGPPRPPQPFHNGGRPGPPGRPPMGMFPPQRPMMPPPH) is disordered. Pro residues predominate over residues 105–127 (PGPPGRPPMGMFPPQRPMMPPPH).

This sequence belongs to the U1 small nuclear ribonucleoprotein C family. U1 snRNP is composed of the 7 core Sm proteins B/B', D1, D2, D3, E, F and G that assemble in a heptameric protein ring on the Sm site of the small nuclear RNA to form the core snRNP, and at least 3 U1 snRNP-specific proteins U1-70K, U1-A and U1-C. U1-C interacts with U1 snRNA and the 5' splice-site region of the pre-mRNA.

It localises to the nucleus. Its function is as follows. Component of the spliceosomal U1 snRNP, which is essential for recognition of the pre-mRNA 5' splice-site and the subsequent assembly of the spliceosome. U1-C is directly involved in initial 5' splice-site recognition for both constitutive and regulated alternative splicing. The interaction with the 5' splice-site seems to precede base-pairing between the pre-mRNA and the U1 snRNA. Stimulates commitment or early (E) complex formation by stabilizing the base pairing of the 5' end of the U1 snRNA and the 5' splice-site region. The chain is U1 small nuclear ribonucleoprotein C from Batrachochytrium dendrobatidis (strain JAM81 / FGSC 10211) (Frog chytrid fungus).